The chain runs to 138 residues: Bis(5'-nucleosyl)-tetraphosphatase [asymmetrical] (138 aa).

A Nudix hydrolase domain is found at 1 to 132 (MVVKAAGLVI…EMGSLLRKFS (132 aa)). A Nudix box motif is present at residues 37–58 (GHVDPGEDEWQAAIRETKEEAN).

This sequence belongs to the Nudix hydrolase family. As to quaternary structure, monomer. The cofactor is Mg(2+). Requires Co(2+) as cofactor. Mn(2+) is required as a cofactor. It depends on Zn(2+) as a cofactor. Ca(2+) serves as cofactor.

It carries out the reaction P(1),P(4)-bis(5'-adenosyl) tetraphosphate + H2O = AMP + ATP + 2 H(+). Its function is as follows. Asymmetrically hydrolyzes Ap4A to yield AMP and ATP. In Caenorhabditis elegans, this protein is Bis(5'-nucleosyl)-tetraphosphatase [asymmetrical] (ndx-4).